The primary structure comprises 310 residues: Olfactory receptor 8I2 (310 aa).

Residues methionine 1–valine 25 are Extracellular-facing. Asparagine 5 carries an N-linked (GlcNAc...) asparagine glycan. A helical membrane pass occupies residues serine 26–isoleucine 46. Topologically, residues threonine 47–glutamine 54 are cytoplasmic. The helical transmembrane segment at leucine 55 to serine 75 threads the bilayer. Residues threonine 76–valine 99 are Extracellular-facing. A disulfide bridge links cysteine 97 with cysteine 188. Residues glutamine 100–tyrosine 120 traverse the membrane as a helical segment. At asparagine 121–lysine 139 the chain is on the cytoplasmic side. The chain crosses the membrane as a helical span at residues valine 140 to valine 160. Over tryptophan 161–methionine 196 the chain is Extracellular. Residues valine 197 to threonine 216 traverse the membrane as a helical segment. Over tyrosine 217 to alanine 236 the chain is Cytoplasmic. The helical transmembrane segment at phenylalanine 237–threonine 257 threads the bilayer. The Extracellular segment spans residues tyrosine 258–alanine 270. A helical transmembrane segment spans residues glutamine 271–leucine 291. Residues arginine 292 to proline 310 are Cytoplasmic-facing.

This sequence belongs to the G-protein coupled receptor 1 family.

The protein localises to the cell membrane. In terms of biological role, odorant receptor. The sequence is that of Olfactory receptor 8I2 (OR8I2) from Homo sapiens (Human).